Here is a 37-residue protein sequence, read N- to C-terminus: Cytochrome b6-f complex subunit 5 (37 aa).

The helical transmembrane segment at 5–25 (LLSGIVLGLITVSALGLFVAA) threads the bilayer.

This sequence belongs to the PetG family. As to quaternary structure, the 4 large subunits of the cytochrome b6-f complex are cytochrome b6, subunit IV (17 kDa polypeptide, PetD), cytochrome f and the Rieske protein, while the 4 small subunits are PetG, PetL, PetM and PetN. The complex functions as a dimer.

Its subcellular location is the plastid. It localises to the chloroplast thylakoid membrane. In terms of biological role, component of the cytochrome b6-f complex, which mediates electron transfer between photosystem II (PSII) and photosystem I (PSI), cyclic electron flow around PSI, and state transitions. PetG is required for either the stability or assembly of the cytochrome b6-f complex. This chain is Cytochrome b6-f complex subunit 5, found in Phaeodactylum tricornutum (strain CCAP 1055/1).